Consider the following 211-residue polypeptide: Thiamine-phosphate synthase (211 aa).

Residues 41-45 and Asn73 contribute to the 4-amino-2-methyl-5-(diphosphooxymethyl)pyrimidine site; that span reads QYRDK. Residues Asp74 and Asp93 each coordinate Mg(2+). Thr112 serves as a coordination point for 4-amino-2-methyl-5-(diphosphooxymethyl)pyrimidine. 139–141 serves as a coordination point for 2-[(2R,5Z)-2-carboxy-4-methylthiazol-5(2H)-ylidene]ethyl phosphate; sequence SPT. Position 142 (Lys142) interacts with 4-amino-2-methyl-5-(diphosphooxymethyl)pyrimidine. 2-[(2R,5Z)-2-carboxy-4-methylthiazol-5(2H)-ylidene]ethyl phosphate is bound by residues Gly169 and 189 to 190; that span reads VS.

The protein belongs to the thiamine-phosphate synthase family. The cofactor is Mg(2+).

The enzyme catalyses 2-[(2R,5Z)-2-carboxy-4-methylthiazol-5(2H)-ylidene]ethyl phosphate + 4-amino-2-methyl-5-(diphosphooxymethyl)pyrimidine + 2 H(+) = thiamine phosphate + CO2 + diphosphate. The catalysed reaction is 2-(2-carboxy-4-methylthiazol-5-yl)ethyl phosphate + 4-amino-2-methyl-5-(diphosphooxymethyl)pyrimidine + 2 H(+) = thiamine phosphate + CO2 + diphosphate. It carries out the reaction 4-methyl-5-(2-phosphooxyethyl)-thiazole + 4-amino-2-methyl-5-(diphosphooxymethyl)pyrimidine + H(+) = thiamine phosphate + diphosphate. Its pathway is cofactor biosynthesis; thiamine diphosphate biosynthesis; thiamine phosphate from 4-amino-2-methyl-5-diphosphomethylpyrimidine and 4-methyl-5-(2-phosphoethyl)-thiazole: step 1/1. Condenses 4-methyl-5-(beta-hydroxyethyl)thiazole monophosphate (THZ-P) and 2-methyl-4-amino-5-hydroxymethyl pyrimidine pyrophosphate (HMP-PP) to form thiamine monophosphate (TMP). The chain is Thiamine-phosphate synthase from Thioalkalivibrio sulfidiphilus (strain HL-EbGR7).